Here is a 357-residue protein sequence, read N- to C-terminus: Cobalt-precorrin-5B C(1)-methyltransferase (357 aa).

This sequence belongs to the CbiD family.

It catalyses the reaction Co-precorrin-5B + S-adenosyl-L-methionine = Co-precorrin-6A + S-adenosyl-L-homocysteine. It functions in the pathway cofactor biosynthesis; adenosylcobalamin biosynthesis; cob(II)yrinate a,c-diamide from sirohydrochlorin (anaerobic route): step 6/10. Catalyzes the methylation of C-1 in cobalt-precorrin-5B to form cobalt-precorrin-6A. The protein is Cobalt-precorrin-5B C(1)-methyltransferase of Alkaliphilus oremlandii (strain OhILAs) (Clostridium oremlandii (strain OhILAs)).